The following is an 80-amino-acid chain: U4-theraphotoxin-Spl1a (80 aa).

Residues 1 to 21 form the signal peptide; that stretch reads MKASLFAVIFGLVVLCACSFA. Positions 22–50 are excised as a propeptide; it reads EDQFASPNELLKSMFVESTHELTPEVEGR. Cystine bridges form between C52-C66, C59-C71, and C65-C75. A Leucine amide modification is found at L79.

This sequence belongs to the neurotoxin 30 (phrixotoxin) family. Expressed by the venom gland.

It localises to the secreted. In terms of biological role, probable ion channel inhibitor. Shows insecticidal activity when injected into mealworms. This Selenotypus plumipes (Australian featherleg tarantula) protein is U4-theraphotoxin-Spl1a.